The chain runs to 595 residues: Parathyroid hormone/parathyroid hormone-related peptide receptor (595 aa).

Residues 1 to 28 (MGAVRIAPGLALLLCCPVLSSAYALVDA) form the signal peptide. The Extracellular portion of the chain corresponds to 29 to 188 (DDVMTKEEQI…REREVFDRLG (160 aa)). 3 disulfide bridges follow: cysteine 48/cysteine 117, cysteine 108/cysteine 148, and cysteine 131/cysteine 170. The tract at residues 66-103 (DKGWASASTSGKPKKEKASGKLYPESEEDKEVPTGSRH) is disordered. N-linked (GlcNAc...) asparagine glycosylation is found at asparagine 151, asparagine 161, asparagine 166, and asparagine 176. The chain crosses the membrane as a helical span at residues 189–209 (MIYTVGYSVSLASLTVAVLIL). The Cytoplasmic portion of the chain corresponds to 210–223 (AYFRRLHCTRNYIH). The helical transmembrane segment at 224 to 244 (MHLFLSFMLRAVSIFVKDAVL) threads the bilayer. Residues 245 to 294 (YSGATLDEAERLTEEELRAIAQAPPPPTAAAGYAGCRVAVTFFLYFLATN) are Extracellular-facing. Residues 295–315 (YYWILVEGLYLHSLIFMAFFS) form a helical membrane-spanning segment. Residues 316-318 (EKK) lie on the Cytoplasmic side of the membrane. Residues 319–339 (YLWGFTVFGWGLPAVFVAVWV) traverse the membrane as a helical segment. Residues 340-360 (SVRATLANTGCWDLSSGNKKW) are Extracellular-facing. A helical membrane pass occupies residues 361–381 (IIQVPILASIVLNFILFINIV). Over 382–404 (RVLATKLRETNAGRCDTRQQYRK) the chain is Cytoplasmic. Residues 405–425 (LLKSTLVLMPLFGVHYIVFMA) traverse the membrane as a helical segment. Topologically, residues 426 to 439 (TPYTEVSGTLWQVQ) are extracellular. A helical membrane pass occupies residues 440–460 (MHYEMLFNSFQGFFVAIIYCF). At 461 to 595 (CNGEVQAEIK…LLQEEWETVM (135 aa)) the chain is on the cytoplasmic side. The Important for interaction with G proteins motif lies at 473–476 (WSRW). The tract at residues 528–595 (TTTATTNGHP…LLQEEWETVM (68 aa)) is disordered. Residues 547–559 (APTLPATPPATAA) show a composition bias toward low complexity. Threonine 553 carries the phosphothreonine modification.

It belongs to the G-protein coupled receptor 2 family. As to quaternary structure, homodimer in the absence of bound ligand. Peptide hormone binding leads to dissociation of the homodimer. Post-translationally, N-glycosylated. High levels in the kidney, with much lower levels in aorta, heart, lung, prostate, testis, and skeletal muscle.

Its subcellular location is the cell membrane. Functionally, G-protein-coupled receptor for parathyroid hormone (PTH) and for parathyroid hormone-related peptide (PTHLH). Ligand binding causes a conformation change that triggers signaling via guanine nucleotide-binding proteins (G proteins) and modulates the activity of downstream effectors, such as adenylate cyclase (cAMP). PTH1R is coupled to G(s) G alpha proteins and mediates activation of adenylate cyclase activity. PTHLH dissociates from PTH1R more rapidly than PTH; as consequence, the cAMP response induced by PTHLH decays faster than the response induced by PTH. In Canis lupus familiaris (Dog), this protein is Parathyroid hormone/parathyroid hormone-related peptide receptor (PTH1R).